The chain runs to 488 residues: Transmembrane protein 39A-B (488 aa).

N-linked (GlcNAc...) asparagine glycans are attached at residues Asn31 and Asn39. A run of 3 helical transmembrane segments spans residues 72–92 (GLVFEFLFFIYLLVTLFTQYI), 110–130 (TSLNFHLIDYHLAAFITVMLA), and 155–175 (LIIGRLVLLTLCGWIFCWTTV). Residue Asn180 is glycosylated (N-linked (GlcNAc...) asparagine). Residues 182-202 (SVLNLLFLGYPFGVYVPLCCF) traverse the membrane as a helical segment. N-linked (GlcNAc...) asparagine glycosylation is present at Asn206. 4 helical membrane passes run 287-307 (EVLFNSLFSAYYVAFLPLCFV), 319-339 (CEHLIMVWINAFVMLSTQLLP), 420-440 (LLNLLLVIEGSLVLYQLYSLL), and 446-466 (NHTLSIALILFCNYYVLFKLL).

The protein belongs to the TMEM39 family.

Its subcellular location is the membrane. This Xenopus laevis (African clawed frog) protein is Transmembrane protein 39A-B (tmem39a-b).